Here is a 121-residue protein sequence, read N- to C-terminus: Large ribosomal subunit protein bL20 (121 aa).

It belongs to the bacterial ribosomal protein bL20 family.

Binds directly to 23S ribosomal RNA and is necessary for the in vitro assembly process of the 50S ribosomal subunit. It is not involved in the protein synthesizing functions of that subunit. This is Large ribosomal subunit protein bL20 from Wolbachia pipientis subsp. Culex pipiens (strain wPip).